The sequence spans 121 residues: Glycine cleavage system H protein (121 aa).

The 83-residue stretch at 16 to 98 folds into the Lipoyl-binding domain; sequence VATIGITAHA…EAGGWFAKVR (83 aa). K57 carries the post-translational modification N6-lipoyllysine.

It belongs to the GcvH family. The glycine cleavage system is composed of four proteins: P, T, L and H. It depends on (R)-lipoate as a cofactor.

In terms of biological role, the glycine cleavage system catalyzes the degradation of glycine. The H protein shuttles the methylamine group of glycine from the P protein to the T protein. The chain is Glycine cleavage system H protein from Phenylobacterium zucineum (strain HLK1).